Here is a 494-residue protein sequence, read N- to C-terminus: 3-octaprenyl-4-hydroxybenzoate carboxy-lyase (494 aa).

A Mn(2+)-binding site is contributed by asparagine 172. Prenylated FMN contacts are provided by residues 175–177 (IYR), 189–191 (RWL), and 194–195 (RG). Glutamate 238 contributes to the Mn(2+) binding site. The active-site Proton donor is aspartate 287.

It belongs to the UbiD family. As to quaternary structure, homohexamer. The cofactor is prenylated FMN. Mn(2+) serves as cofactor.

It localises to the cell membrane. The catalysed reaction is a 4-hydroxy-3-(all-trans-polyprenyl)benzoate + H(+) = a 2-(all-trans-polyprenyl)phenol + CO2. It functions in the pathway cofactor biosynthesis; ubiquinone biosynthesis. Its function is as follows. Catalyzes the decarboxylation of 3-octaprenyl-4-hydroxy benzoate to 2-octaprenylphenol, an intermediate step in ubiquinone biosynthesis. The polypeptide is 3-octaprenyl-4-hydroxybenzoate carboxy-lyase (Escherichia coli O139:H28 (strain E24377A / ETEC)).